Reading from the N-terminus, the 374-residue chain is UDP-N-acetylglucosamine--N-acetylmuramyl-(pentapeptide) pyrophosphoryl-undecaprenol N-acetylglucosamine transferase (374 aa).

UDP-N-acetyl-alpha-D-glucosamine-binding positions include 13-15 (TGG), N124, R165, S193, and Q294.

The protein belongs to the glycosyltransferase 28 family. MurG subfamily.

It is found in the cell inner membrane. The catalysed reaction is di-trans,octa-cis-undecaprenyl diphospho-N-acetyl-alpha-D-muramoyl-L-alanyl-D-glutamyl-meso-2,6-diaminopimeloyl-D-alanyl-D-alanine + UDP-N-acetyl-alpha-D-glucosamine = di-trans,octa-cis-undecaprenyl diphospho-[N-acetyl-alpha-D-glucosaminyl-(1-&gt;4)]-N-acetyl-alpha-D-muramoyl-L-alanyl-D-glutamyl-meso-2,6-diaminopimeloyl-D-alanyl-D-alanine + UDP + H(+). It participates in cell wall biogenesis; peptidoglycan biosynthesis. Functionally, cell wall formation. Catalyzes the transfer of a GlcNAc subunit on undecaprenyl-pyrophosphoryl-MurNAc-pentapeptide (lipid intermediate I) to form undecaprenyl-pyrophosphoryl-MurNAc-(pentapeptide)GlcNAc (lipid intermediate II). The polypeptide is UDP-N-acetylglucosamine--N-acetylmuramyl-(pentapeptide) pyrophosphoryl-undecaprenol N-acetylglucosamine transferase (Rhizobium rhizogenes (strain K84 / ATCC BAA-868) (Agrobacterium radiobacter)).